Here is a 211-residue protein sequence, read N- to C-terminus: MFTYYFQGLALGAAMILPLGPQNAFVMNQGIRRQYHLMIALLCAVSDLLLICAGIFGGSALLMQSPWLLAIVTWGGVAFLLWYGFGALKTAFSQNLELASAEVMQQGRWKIIITMLAVTWLNPHVYLDTFVVLGSLGGQLAVEPKRWFALGTISASFLWFFGLALLAAWLAPRLRTAKAQRIINIVVGAVMWFIAFQLAKEGVGHILALLN.

6 helical membrane passes run 1–21, 37–57, 68–88, 111–131, 147–167, and 182–202; these read MFTY…PLGP, LMIA…GIFG, LLAI…FGAL, IIIT…DTFV, WFAL…ALLA, and IINI…AKEG.

This sequence belongs to the LysE/ArgO transporter (TC 2.A.75) family.

It is found in the cell inner membrane. The enzyme catalyses L-arginine(in) = L-arginine(out). In terms of biological role, involved in the export of arginine. Important to control the intracellular level of arginine and the correct balance between arginine and lysine. This chain is Arginine exporter protein ArgO, found in Klebsiella pneumoniae (strain 342).